Consider the following 310-residue polypeptide: Olfactory receptor 2A7 (310 aa).

Over 1–24 the chain is Extracellular; that stretch reads MGDNITSITEFLLLGFPVGPRIQM. Asn-4 carries an N-linked (GlcNAc...) asparagine glycan. A helical membrane pass occupies residues 25 to 48; that stretch reads LLFGLFSLFYVFTLLGNGTILGLI. At 49-56 the chain is on the cytoplasmic side; sequence SLDSRLHA. Residues 57–78 form a helical membrane-spanning segment; it reads PMYFFLSHLAVVDIAYACNTVP. Over 79–99 the chain is Extracellular; sequence RMLVNLLHPAKPISFAGRMMQ. A helical transmembrane segment spans residues 100-119; that stretch reads TFLFSTFAVTECLLLVVMSY. Residues 120-138 are Cytoplasmic-facing; the sequence is DLYVAICHPLRYLAIMTWR. The chain crosses the membrane as a helical span at residues 139–157; the sequence is VCITLAVTSWTTGVLLSLI. The Extracellular segment spans residues 158–194; sequence HLVLLLPLPFCRPQKIYHFFCEILAVLKLACADTHIN. The chain crosses the membrane as a helical span at residues 195–218; sequence ENMVLAGAISGLVGPLSTIVVSYM. Over 219–235 the chain is Cytoplasmic; sequence CILCAILQIQSREVQRK. The chain crosses the membrane as a helical span at residues 236 to 258; sequence AFCTCFSHLCVIGLFYGTAIIMY. Residues 259–271 lie on the Extracellular side of the membrane; sequence VGPRYGNPKEQKK. A helical membrane pass occupies residues 272–291; the sequence is YLLLFHSLFNPMLNPLICSL. Topologically, residues 292 to 310 are cytoplasmic; it reads RNSEVKNTLKRVLGVERAL.

The protein belongs to the G-protein coupled receptor 1 family.

The protein localises to the cell membrane. Odorant receptor. This is Olfactory receptor 2A7 (OR2A7) from Homo sapiens (Human).